The primary structure comprises 319 residues: Aspartate carbamoyltransferase catalytic subunit (319 aa).

Carbamoyl phosphate contacts are provided by Arg65 and Thr66. L-aspartate is bound at residue Lys93. Carbamoyl phosphate contacts are provided by Arg115, His149, and Gln152. Arg182 and Arg237 together coordinate L-aspartate. Positions 278 and 279 each coordinate carbamoyl phosphate.

The protein belongs to the aspartate/ornithine carbamoyltransferase superfamily. ATCase family. As to quaternary structure, heterododecamer (2C3:3R2) of six catalytic PyrB chains organized as two trimers (C3), and six regulatory PyrI chains organized as three dimers (R2).

The catalysed reaction is carbamoyl phosphate + L-aspartate = N-carbamoyl-L-aspartate + phosphate + H(+). It functions in the pathway pyrimidine metabolism; UMP biosynthesis via de novo pathway; (S)-dihydroorotate from bicarbonate: step 2/3. Functionally, catalyzes the condensation of carbamoyl phosphate and aspartate to form carbamoyl aspartate and inorganic phosphate, the committed step in the de novo pyrimidine nucleotide biosynthesis pathway. The sequence is that of Aspartate carbamoyltransferase catalytic subunit from Janthinobacterium sp. (strain Marseille) (Minibacterium massiliensis).